The sequence spans 251 residues: Probable phosphatase Sputcn32_1369 (251 aa).

Zn(2+)-binding residues include H8, H10, H16, H41, E74, H102, H132, D193, and H195.

Belongs to the PHP family. The cofactor is Zn(2+).

This is Probable phosphatase Sputcn32_1369 from Shewanella putrefaciens (strain CN-32 / ATCC BAA-453).